Consider the following 601-residue polypeptide: Putative purine permease C1399.01c (601 aa).

12 helical membrane passes run 64–84 (VPVLLALLLGFQHALAMVGGV), 102–122 (TNYLVSAGLISSGIMTLIQIA), 131–151 (YYIGTGMLSVLGISFTSVSVA), 179–199 (YGAFLATACVCSLLEIFMSFI), 207–227 (LFPPIVTGPVVLLIGTSLISS), 264–284 (GWGSAQFIGLGFSVFATIIII), 294–314 (TTSVVLGLVVGMIISAATGYW), 337–357 (IYGPAVLPMLALYIVNMMEAI), 424–444 (FFCAVILFFMGLFAKFAAVFV), 450–470 (VLGGMTTFLFSSVAVSGIAII), 481–501 (FILTASMTLGMGAILVPDWFT), and 522–542 (LVMENGFAIGAFISIFLNLIL).

Belongs to the nucleobase:cation symporter-2 (NCS2) (TC 2.A.40) family.

The protein localises to the vacuole membrane. The polypeptide is Putative purine permease C1399.01c (Schizosaccharomyces pombe (strain 972 / ATCC 24843) (Fission yeast)).